Reading from the N-terminus, the 467-residue chain is L-seryl-tRNA(Sec) selenium transferase (467 aa).

At K298 the chain carries N6-(pyridoxal phosphate)lysine.

It belongs to the SelA family. The cofactor is pyridoxal 5'-phosphate.

The protein resides in the cytoplasm. It carries out the reaction L-seryl-tRNA(Sec) + selenophosphate + H(+) = L-selenocysteinyl-tRNA(Sec) + phosphate. It functions in the pathway aminoacyl-tRNA biosynthesis; selenocysteinyl-tRNA(Sec) biosynthesis; selenocysteinyl-tRNA(Sec) from L-seryl-tRNA(Sec) (bacterial route): step 1/1. In terms of biological role, converts seryl-tRNA(Sec) to selenocysteinyl-tRNA(Sec) required for selenoprotein biosynthesis. This is L-seryl-tRNA(Sec) selenium transferase from Alkaliphilus metalliredigens (strain QYMF).